We begin with the raw amino-acid sequence, 23 residues long: U3-ctenitoxin-Co1a (23 aa).

Disulfide bonds link Cys-2-Cys-17 and Cys-9-Cys-22.

As to expression, expressed by the venom gland.

Its subcellular location is the secreted. Its function is as follows. Antagonist of L-type calcium channels (Cav1/CACNA1). The chain is U3-ctenitoxin-Co1a from Ctenus ornatus (Brazilian spider).